The following is a 313-amino-acid chain: Ribosomal RNA small subunit methyltransferase H (313 aa).

S-adenosyl-L-methionine is bound by residues 34 to 36, Asp-53, Phe-80, Asp-101, and Gln-108; that span reads GGH.

Belongs to the methyltransferase superfamily. RsmH family.

It is found in the cytoplasm. The catalysed reaction is cytidine(1402) in 16S rRNA + S-adenosyl-L-methionine = N(4)-methylcytidine(1402) in 16S rRNA + S-adenosyl-L-homocysteine + H(+). Its function is as follows. Specifically methylates the N4 position of cytidine in position 1402 (C1402) of 16S rRNA. The protein is Ribosomal RNA small subunit methyltransferase H of Lacticaseibacillus casei (strain BL23) (Lactobacillus casei).